Consider the following 844-residue polypeptide: Translation initiation factor IF-2 (844 aa).

Polar residues predominate over residues Arg-120–Lys-132. Residues Arg-120–Pro-220 form a disordered region. Residues Asp-161–Asn-175 show a composition bias toward basic and acidic residues. Over residues Ser-205–Asn-219 the composition is skewed to basic residues. A tr-type G domain is found at Ser-343–Glu-510. The G1 stretch occupies residues Gly-352–Thr-359. Gly-352–Thr-359 serves as a coordination point for GTP. A G2 region spans residues Gly-377 to His-381. The tract at residues Asp-398–Gly-401 is G3. Residues Asp-398 to His-402 and Asn-452 to Asp-455 contribute to the GTP site. Positions Asn-452–Asp-455 are G4. Residues Ser-488–Lys-490 are G5.

The protein belongs to the TRAFAC class translation factor GTPase superfamily. Classic translation factor GTPase family. IF-2 subfamily.

It localises to the cytoplasm. In terms of biological role, one of the essential components for the initiation of protein synthesis. Protects formylmethionyl-tRNA from spontaneous hydrolysis and promotes its binding to the 30S ribosomal subunits. Also involved in the hydrolysis of GTP during the formation of the 70S ribosomal complex. In Francisella philomiragia subsp. philomiragia (strain ATCC 25017 / CCUG 19701 / FSC 153 / O#319-036), this protein is Translation initiation factor IF-2.